A 35-amino-acid chain; its full sequence is Photosystem II reaction center protein Y (35 aa).

The Lumenal portion of the chain corresponds to 1–4 (MDTR). The chain crosses the membrane as a helical span at residues 5 to 23 (LLVVLLPVATAAAWALFNI). The Stromal segment spans residues 24–35 (GRLALQQLKRMS).

This sequence belongs to the PsbY family. PSII is composed of 1 copy each of membrane proteins PsbA, PsbB, PsbC, PsbD, PsbE, PsbF, PsbH, PsbI, PsbJ, PsbK, PsbL, PsbM, PsbT, PsbX, PsbY, PsbZ, Psb30/Ycf12, at least 3 peripheral proteins of the oxygen-evolving complex and a large number of cofactors. It forms dimeric complexes.

It is found in the plastid. The protein localises to the chloroplast thylakoid membrane. Its function is as follows. Loosely associated component of the core of photosystem II (PSII), it is not always seen in crystals. PSII is a light-driven water plastoquinone oxidoreductase, using light energy to abstract electrons from H(2)O, generating a proton gradient subsequently used for ATP formation. The chain is Photosystem II reaction center protein Y from Emiliania huxleyi (Coccolithophore).